Here is a 199-residue protein sequence, read N- to C-terminus: NAD(P)H dehydrogenase (quinone) (199 aa).

The 187-residue stretch at 4-190 folds into the Flavodoxin-like domain; sequence VLVLYYSAYG…DGARFQGKRV (187 aa). FMN-binding positions include 10–15 and 78–80; these read SAYGHM and TRY. Tyrosine 12 contributes to the NAD(+) binding site. Tryptophan 98 lines the substrate pocket. Residues 113–119 and histidine 134 contribute to the FMN site; that span reads STATQHG. The tract at residues 157-185 is disordered; sequence GGAPYGMTTTADGDGSRQPSEQELDGARF. Residues 163–177 are compositionally biased toward polar residues; it reads MTTTADGDGSRQPSE.

The protein belongs to the WrbA family. The cofactor is FMN.

The catalysed reaction is a quinone + NADH + H(+) = a quinol + NAD(+). It carries out the reaction a quinone + NADPH + H(+) = a quinol + NADP(+). The chain is NAD(P)H dehydrogenase (quinone) from Brucella anthropi (strain ATCC 49188 / DSM 6882 / CCUG 24695 / JCM 21032 / LMG 3331 / NBRC 15819 / NCTC 12168 / Alc 37) (Ochrobactrum anthropi).